The following is a 492-amino-acid chain: MTLWINGDWITGQGASRVKRNPVSGEVLWQGNDADAAQVEQACRAARAAFPRWARLSLAERQVVVERFAGLLESNKAELTAIIARETGKPRWEAATEVTAMINKIAISIKAYHVRTGEQRSEMPDGAASLRHRPHGVLAVFGPYNFPGHLPNGHIVPALLAGNTIIFKPSELTPWSGEAVMRLWQQAGLPPGVLNLVQGGRETGQALSALEDLDGLLFTGSANTGYQLHRQLSGQPEKILALEMGGNNPLIIDEVADIDAAVHLTIQSAFVTAGQRCTCARRLLLKSGAQGDAFLASLVAVSQRLTPGNWDDEPQPFIGGLISEQAAQQVVTAWQQLEAMGGRTLLAPRLLQAGTSLLTPGIIEMTGVGGVPDEEVFGPLLRVWRYDTFDEAIRMANNTRFGLFCGLVSPEREKFDQLLLEARAGIVNWNKPLTGAASTAPFGGIGASGNHRPSAWYAADYCAWPMASLESDSLTLPATLNPGLDFSDEVVR.

220–225 (GSANTG) is a binding site for NAD(+). Residues glutamate 243 and cysteine 277 contribute to the active site.

This sequence belongs to the aldehyde dehydrogenase family. AstD subfamily.

The enzyme catalyses N-succinyl-L-glutamate 5-semialdehyde + NAD(+) + H2O = N-succinyl-L-glutamate + NADH + 2 H(+). It functions in the pathway amino-acid degradation; L-arginine degradation via AST pathway; L-glutamate and succinate from L-arginine: step 4/5. In terms of biological role, catalyzes the NAD-dependent reduction of succinylglutamate semialdehyde into succinylglutamate. The protein is N-succinylglutamate 5-semialdehyde dehydrogenase of Shigella flexneri serotype 5b (strain 8401).